We begin with the raw amino-acid sequence, 100 residues long: Defensin-6 (100 aa).

The first 19 residues, 1-19 (MRTLTILTAVLLVALQAKA), serve as a signal peptide directing secretion. A propeptide spanning residues 20–68 (EPLQAEDEPLQAKAYEADAQEQRGANDQDFAVSFAEDASSSLRALGSTR) is cleaved from the precursor. 3 disulfide bridges follow: Cys-72-Cys-99, Cys-74-Cys-88, and Cys-78-Cys-98.

It belongs to the alpha-defensin family. Homodimer. Self-assembles into higher-order oligomers termed nanonets, fibril-like structures that entrap microbes. Self-assembly into nanonets seems to protect against proteolytic digestion in duodenal fluid. Interacts with Y.enterocolitica invasin and S.typhimurium fliC/flagellim; the interaction creates an anchoring site for progressive DEFA6 self-assembly into nanonets. In terms of processing, proteolytically cleaved by trypsin at Arg-68; the propeptide is stored in the tissue of the small intestine and the mature peptide is found in the luminal fluid; cleavage may occur during or after release into the lumen. The N-terminal propeptide region suppresses self-assembly and renders DEFA6 propeptide unable to agglutinate bacteria and protect human epithelial cells from bacterial invasion. Post-translationally, under reducing conditions, naturally present in the gut owing to the low redox potential or enzymatically generated by the thioredoxin system, the disulfide bridges are opened leading to a conformational change of DEF6, thereby changing its antimicrobial spectrum. The reduced form exhibits inhibitory activity against anaerobic bacteria, in contrast to the minimal antimicrobial activity of the disulfide-linked oxidized form. The formation of higher-order nanonets and bacterial entrapment is independent of the redox state.

It localises to the secreted. Its subcellular location is the cytoplasmic vesicle. The protein resides in the secretory vesicle. Its function is as follows. Host-defense peptide that contributes to intestinal innate immunity and mediates homeostasis at mucosal surfaces by forming higher-order oligomers that capture bacteria and prevent microbial invasion of the epithelium. After binding to bacterial surface proteins, undergoes ordered self-assembly to form fibril-like nanonets that surround and entangle bacteria and thereby prevent bacterial invasion across the epithelial barrier. Entangles and agglutinates Gram-negative bacteria, such as E.coli, S.typhimurium and Y.enterocolitica, and Gram-positive bacteria such as L.monocytogenes, thereby protecting the intestine against invasion by enteric bacterial pathogens. Blocks adhesion of C.albicans to intestinal epithelial cells and thereby suppresses fungal invasion of epithelial cells and biofilm formation. Under reducing conditions and in an acidic environment similar to the intestinal milieu, exhibits inhibitory activity against anaerobic bacteria such as B.adolescentis, L.acidophilus, and B.breve, as well as B.longum and S.thermophilus, possibly by leading to alterations in bacterial cell envelope structures. The disulfide-linked oxidized form exhibits negligible antimicrobial activity against Gram-negative and Gram-positive bacteria, as compared to the enteric defensin DEFA5. This chain is Defensin-6 (DEFA6), found in Pan troglodytes (Chimpanzee).